Consider the following 233-residue polypeptide: Small ribosomal subunit protein uS3 (233 aa).

Positions 39–107 (VRKYLTKELE…PAQINIAEVR (69 aa)) constitute a KH type-2 domain. The tract at residues 214-233 (VEQPEKPSAQPKKQQRKGRK) is disordered.

It belongs to the universal ribosomal protein uS3 family. Part of the 30S ribosomal subunit. Forms a tight complex with proteins S10 and S14.

Its function is as follows. Binds the lower part of the 30S subunit head. Binds mRNA in the 70S ribosome, positioning it for translation. This is Small ribosomal subunit protein uS3 from Pectobacterium atrosepticum (strain SCRI 1043 / ATCC BAA-672) (Erwinia carotovora subsp. atroseptica).